A 767-amino-acid polypeptide reads, in one-letter code: Transducin-like enhancer protein 2 (767 aa).

Positions 1-152 (MYPQGRHPTP…SLLGQQNQLQ (152 aa)) are q domain. The tract at residues 153 to 215 (PLSHAPPVPL…SRVDRAASRS (63 aa)) is GP domain. The span at 198-212 (RVGVDAEGSRVDRAA) shows a compositional bias: basic and acidic residues. 3 disordered regions span residues 198–257 (RVGV…EEDK), 264–283 (VDEDQPSEPPSPVTTPCGKA), and 296–346 (SPAS…SSAS). Residues 216–279 (SSPSPPESLV…SEPPSPVTTP (64 aa)) are ccN domain. The short motif at 238 to 242 (KQQRA) is the Nuclear localization signal element. S253 bears the Phosphoserine; by CK2 mark. S274 bears the Phosphoserine; by CDK1 mark. T278 carries the phosphothreonine; by CDK1 modification. The SP domain stretch occupies residues 280 to 447 (CGKAPLCIPA…VAKPAYSFHV (168 aa)). Positions 296–309 (SPASLASSLGSPLP) are enriched in low complexity. The residue at position 306 (S306) is a Phosphoserine. Positions 323–346 (TPASRSCGTSPPQDSSTPGPSSAS) are enriched in polar residues. WD repeat units follow at residues 479–517 (AHGEVVCAVTISSSTQHVYTGGKGCVKVWDVGQPGSKTP), 525–564 (NRDNYIRSCKLLPDGQSLIVGGEASTLSIWDLAAPTPRIK), 569–608 (SSAPACYALAVSPDAKVCFSCCSDGNIVVWDLQNQAMVRQ), 611–650 (GHTDGASCIDISDYGTRLWTGGLDNTVRCWDLREGRQLQQ), 693–732 (LHESCVLSLKFASCGRWFVSTGKDNLLNAWRTPYGASIFQ), and 734–766 (KESSSVLSCDISRNNKYIVTGSGDKKATVYEVV).

This sequence belongs to the WD repeat Groucho/TLE family. As to quaternary structure, homooligomer and heterooligomer with other family members. Binds LEF1, TCF7, TCF7L1, TCF7L2, UTY, HES1 and HES5. Ubiquitinated by XIAP/BIRC4. Expressed in bone marrow-derived macrophages.

It localises to the nucleus. Transcriptional corepressor that binds to a number of transcription factors. Inhibits the transcriptional activation mediated by CTNNB1 and TCF family members in Wnt signaling. The effects of full-length TLE family members may be modulated by association with dominant-negative AES. The chain is Transducin-like enhancer protein 2 (Tle2) from Mus musculus (Mouse).